A 146-amino-acid chain; its full sequence is Anti-sigma F factor (146 aa).

Belongs to the anti-sigma-factor family.

The enzyme catalyses L-seryl-[protein] + ATP = O-phospho-L-seryl-[protein] + ADP + H(+). It carries out the reaction L-threonyl-[protein] + ATP = O-phospho-L-threonyl-[protein] + ADP + H(+). In terms of biological role, binds to sigma F and blocks its ability to form an RNA polymerase holoenzyme (E-sigma F). Phosphorylates SpoIIAA on a serine residue. This phosphorylation may enable SpoIIAA to act as an anti-anti-sigma factor that counteracts SpoIIAB and thus releases sigma F from inhibition. In Halalkalibacterium halodurans (strain ATCC BAA-125 / DSM 18197 / FERM 7344 / JCM 9153 / C-125) (Bacillus halodurans), this protein is Anti-sigma F factor.